An 82-amino-acid chain; its full sequence is Translational regulator CsrA (82 aa).

Belongs to the CsrA/RsmA family. Homodimer; the beta-strands of each monomer intercalate to form a hydrophobic core, while the alpha-helices form wings that extend away from the core.

The protein localises to the cytoplasm. Functionally, a translational regulator that binds mRNA to regulate translation initiation and/or mRNA stability. Usually binds in the 5'-UTR at or near the Shine-Dalgarno sequence preventing ribosome-binding, thus repressing translation. Its main target seems to be the major flagellin gene, while its function is anatagonized by FliW. This chain is Translational regulator CsrA, found in Geobacillus kaustophilus (strain HTA426).